We begin with the raw amino-acid sequence, 126 residues long: Glycine cleavage system H protein (126 aa).

The Lipoyl-binding domain occupies 22-104 (TVTIGITEYA…YEKAWMVKVE (83 aa)). Lysine 63 is modified (N6-lipoyllysine).

It belongs to the GcvH family. In terms of assembly, the glycine cleavage system is composed of four proteins: P, T, L and H. Requires (R)-lipoate as cofactor.

The glycine cleavage system catalyzes the degradation of glycine. The H protein shuttles the methylamine group of glycine from the P protein to the T protein. Functionally, is also involved in protein lipoylation via its role as an octanoyl/lipoyl carrier protein intermediate. This Staphylococcus saprophyticus subsp. saprophyticus (strain ATCC 15305 / DSM 20229 / NCIMB 8711 / NCTC 7292 / S-41) protein is Glycine cleavage system H protein.